A 215-amino-acid polypeptide reads, in one-letter code: Large ribosomal subunit protein mL43 (215 aa).

The protein belongs to the mitochondrion-specific ribosomal protein mL43 family. Component of the mitochondrial large ribosomal subunit (mt-LSU). Mature mammalian 55S mitochondrial ribosomes consist of a small (28S) and a large (39S) subunit. The 28S small subunit contains a 12S ribosomal RNA (12S mt-rRNA) and 30 different proteins. The 39S large subunit contains a 16S rRNA (16S mt-rRNA), a copy of mitochondrial valine transfer RNA (mt-tRNA(Val)), which plays an integral structural role, and 52 different proteins. In terms of tissue distribution, high relative levels in skeletal muscle and testis. Lower levels of expression in the heart, brain, placenta, lung, liver, kidney, pancreas, spleen, thymus, prostate, ovary, small intestine, colon and leukocytes. Expression is coregulated with TWNK.

Its subcellular location is the mitochondrion. The sequence is that of Large ribosomal subunit protein mL43 (MRPL43) from Homo sapiens (Human).